A 196-amino-acid polypeptide reads, in one-letter code: Imidazole glycerol phosphate synthase subunit HisH (196 aa).

A Glutamine amidotransferase type-1 domain is found at 2–196; it reads NIVIIDTNCS…QQLVKNFLEI (195 aa). Cysteine 77 (nucleophile) is an active-site residue. Active-site residues include histidine 178 and glutamate 180.

In terms of assembly, heterodimer of HisH and HisF.

The protein localises to the cytoplasm. The enzyme catalyses 5-[(5-phospho-1-deoxy-D-ribulos-1-ylimino)methylamino]-1-(5-phospho-beta-D-ribosyl)imidazole-4-carboxamide + L-glutamine = D-erythro-1-(imidazol-4-yl)glycerol 3-phosphate + 5-amino-1-(5-phospho-beta-D-ribosyl)imidazole-4-carboxamide + L-glutamate + H(+). It catalyses the reaction L-glutamine + H2O = L-glutamate + NH4(+). It participates in amino-acid biosynthesis; L-histidine biosynthesis; L-histidine from 5-phospho-alpha-D-ribose 1-diphosphate: step 5/9. Functionally, IGPS catalyzes the conversion of PRFAR and glutamine to IGP, AICAR and glutamate. The HisH subunit catalyzes the hydrolysis of glutamine to glutamate and ammonia as part of the synthesis of IGP and AICAR. The resulting ammonia molecule is channeled to the active site of HisF. This chain is Imidazole glycerol phosphate synthase subunit HisH, found in Blochmanniella pennsylvanica (strain BPEN).